The sequence spans 176 residues: Cytochrome b (176 aa).

Transmembrane regions (helical) follow at residues 33 to 53 (FGSLLGICLGLQILTGLFLAM), 77 to 98 (WVLRYLHANGASMFFICLYLHV), and 113 to 133 (WNMGVVLLFAVMATAFMGYVL). Heme b is bound by residues H83 and H97.

This sequence belongs to the cytochrome b family. The cytochrome bc1 complex contains 11 subunits: 3 respiratory subunits (MT-CYB, CYC1 and UQCRFS1), 2 core proteins (UQCRC1 and UQCRC2) and 6 low-molecular weight proteins (UQCRH/QCR6, UQCRB/QCR7, UQCRQ/QCR8, UQCR10/QCR9, UQCR11/QCR10 and a cleavage product of UQCRFS1). This cytochrome bc1 complex then forms a dimer. Requires heme b as cofactor.

It is found in the mitochondrion inner membrane. Functionally, component of the ubiquinol-cytochrome c reductase complex (complex III or cytochrome b-c1 complex) that is part of the mitochondrial respiratory chain. The b-c1 complex mediates electron transfer from ubiquinol to cytochrome c. Contributes to the generation of a proton gradient across the mitochondrial membrane that is then used for ATP synthesis. This Nycticeius humeralis (Evening bat) protein is Cytochrome b (MT-CYB).